Consider the following 225-residue polypeptide: UPF0502 protein Ajs_3392 (225 aa).

It belongs to the UPF0502 family.

This chain is UPF0502 protein Ajs_3392, found in Acidovorax sp. (strain JS42).